The chain runs to 134 residues: ATP synthase epsilon chain (134 aa).

This sequence belongs to the ATPase epsilon chain family. In terms of assembly, F-type ATPases have 2 components, CF(1) - the catalytic core - and CF(0) - the membrane proton channel. CF(1) has five subunits: alpha(3), beta(3), gamma(1), delta(1), epsilon(1). CF(0) has three main subunits: a, b and c.

It localises to the cellular thylakoid membrane. In terms of biological role, produces ATP from ADP in the presence of a proton gradient across the membrane. This is ATP synthase epsilon chain from Prochlorococcus marinus (strain MIT 9301).